A 276-amino-acid polypeptide reads, in one-letter code: NH(3)-dependent NAD(+) synthetase (276 aa).

An ATP-binding site is contributed by 43 to 50 (GISGGVDS). Mg(2+) is bound at residue Asp49. Arg146 lines the deamido-NAD(+) pocket. Thr166 contacts ATP. Glu171 contacts Mg(2+). Lys179 and Asp186 together coordinate deamido-NAD(+). 2 residues coordinate ATP: Lys195 and Thr217. 266-267 (HK) is a binding site for deamido-NAD(+).

This sequence belongs to the NAD synthetase family. In terms of assembly, homodimer.

It catalyses the reaction deamido-NAD(+) + NH4(+) + ATP = AMP + diphosphate + NAD(+) + H(+). Its pathway is cofactor biosynthesis; NAD(+) biosynthesis; NAD(+) from deamido-NAD(+) (ammonia route): step 1/1. Catalyzes the ATP-dependent amidation of deamido-NAD to form NAD. Uses ammonia as a nitrogen source. The sequence is that of NH(3)-dependent NAD(+) synthetase from Vibrio campbellii (strain ATCC BAA-1116).